A 291-amino-acid chain; its full sequence is Putative transport permease ycf38 (291 aa).

The next 6 helical transmembrane spans lie at 47–67 (ATLMAGIIQPLLWLILFGGLF), 87–107 (SGIIIFTSFTGALNSGLPLMF), 135–155 (FMTCISLIQVVFIVTASLFMG), 165–185 (MIFGLMILLVTVGVTMLSLAL), 195–215 (LLAFILVVNLPFLFSSTALAP), and 262–282 (ICLGQIIILLIALDIMAAYLV). Residues 47-289 (ATLMAGIIQP…YLVSNILKAK (243 aa)) enclose the ABC transmembrane type-2 domain.

The protein belongs to the ABC-2 integral membrane protein family.

It localises to the plastid. The protein resides in the chloroplast membrane. The protein is Putative transport permease ycf38 (ycf38) of Pyropia yezoensis (Susabi-nori).